Consider the following 969-residue polypeptide: Alanine--tRNA ligase (969 aa).

The N-terminal 8 residues, 1 to 8, are a transit peptide targeting the mitochondrion; the sequence is MIKTLLRR. Residues His616, His620, Cys735, and His739 each contribute to the Zn(2+) site.

Belongs to the class-II aminoacyl-tRNA synthetase family. In terms of assembly, monomer. Zn(2+) serves as cofactor.

Its subcellular location is the mitochondrion. It localises to the cytoplasm. The catalysed reaction is tRNA(Ala) + L-alanine + ATP = L-alanyl-tRNA(Ala) + AMP + diphosphate. Functionally, catalyzes the attachment of alanine to tRNA(Ala) in a two-step reaction: alanine is first activated by ATP to form Ala-AMP and then transferred to the acceptor end of tRNA(Ala). Also edits incorrectly charged tRNA(Ala) via its editing domain. The sequence is that of Alanine--tRNA ligase from Candida albicans (strain SC5314 / ATCC MYA-2876) (Yeast).